Here is a 394-residue protein sequence, read N- to C-terminus: Chalcone synthase 4 (394 aa).

Residue C165 is part of the active site.

The protein belongs to the thiolase-like superfamily. Chalcone/stilbene synthases family.

It carries out the reaction (E)-4-coumaroyl-CoA + 3 malonyl-CoA + 3 H(+) = 2',4,4',6'-tetrahydroxychalcone + 3 CO2 + 4 CoA. Its pathway is secondary metabolite biosynthesis; flavonoid biosynthesis. Its function is as follows. The primary product of this enzyme is 4,2',4',6'-tetrahydroxychalcone (also termed naringenin-chalcone or chalcone) which can under specific conditions spontaneously isomerize into naringenin. In Bromheadia finlaysoniana (Orchid), this protein is Chalcone synthase 4 (CHS4).